We begin with the raw amino-acid sequence, 729 residues long: Neurochondrin (729 aa).

At Ser-2 the chain carries N-acetylserine. Phosphoserine is present on Ser-2. 2 S-palmitoyl cysteine lipidation sites follow: Cys-3 and Cys-4. Asymmetric dimethylarginine is present on Arg-75. A Phosphoserine modification is found at Ser-448.

Belongs to the neurochondrin family. Interacts with MCHR1. Interacts with SEMA4C. Interacts with DIAPH1 (via FH3 domain). Interacts with GRM5. Post-translationally, palmitoylated. Palmitoylation by ZDHHC1, ZDHHC3 and ZDHHC11 regulates the association of NCDN with endosome membranes. May also be palmitoylated by ZDHHC7.

The protein localises to the cytoplasm. It is found in the cytosol. The protein resides in the endosome membrane. It localises to the cell projection. Its subcellular location is the dendrite. The protein localises to the postsynapse. In terms of biological role, probably involved in signal transduction, in the nervous system, via increasing cell surface localization of GRM5 and positively regulating its signaling. Required for the spatial learning process. Acts as a negative regulator of Ca(2+)-calmodulin-dependent protein kinase 2 (CaMK2) phosphorylation. May play a role in modulating melanin-concentrating hormone-mediated functions via its interaction with MCHR1 that interferes with G protein-coupled signal transduction. May be involved in bone metabolism. May also be involved in neurite outgrowth. This is Neurochondrin (NCDN) from Bos taurus (Bovine).